We begin with the raw amino-acid sequence, 298 residues long: GPN-loop GTPase QQT1 (298 aa).

Position 12–17 (12–17) interacts with GTP; that stretch reads GSGKTT. The Gly-Pro-Asn (GPN)-loop; involved in dimer interface signature appears at 69–71; it reads GPN. 173 to 176 contributes to the GTP binding site; sequence SKID.

It belongs to the GPN-loop GTPase family. In terms of assembly, heterodimer with QQT2. Expressed in vascular tissues, root tips, apical and root meristematic regions, and floral primordia.

It is found in the cytoplasm. The protein resides in the nucleus. It localises to the cytoskeleton. Its subcellular location is the spindle. The protein localises to the phragmoplast. Small GTPase that is essential for the correct formation of the tangential divisions in early embryos. Associates with microtubule during mitosis and may function in the positioning of the division plane. May participate in the patterning of the early embryo at the octant-dermatogen transition. Is crucial for normal development of the plant. This Arabidopsis thaliana (Mouse-ear cress) protein is GPN-loop GTPase QQT1.